The following is a 134-amino-acid chain: Small ribosomal subunit protein bS6 (134 aa).

Residues 103-134 (AAPVKSAEEGTEEVAAEAATEAPAETTTTVEV) are disordered. The span at 118–134 (AEAATEAPAETTTTVEV) shows a compositional bias: low complexity.

Belongs to the bacterial ribosomal protein bS6 family.

Binds together with bS18 to 16S ribosomal RNA. The chain is Small ribosomal subunit protein bS6 from Geobacter sp. (strain M21).